The following is a 151-amino-acid chain: D-aminoacyl-tRNA deacylase (151 aa).

Positions Gly-137 to Pro-138 match the Gly-cisPro motif, important for rejection of L-amino acids motif.

The protein belongs to the DTD family. Homodimer.

Its subcellular location is the cytoplasm. It carries out the reaction glycyl-tRNA(Ala) + H2O = tRNA(Ala) + glycine + H(+). The catalysed reaction is a D-aminoacyl-tRNA + H2O = a tRNA + a D-alpha-amino acid + H(+). Functionally, an aminoacyl-tRNA editing enzyme that deacylates mischarged D-aminoacyl-tRNAs. Also deacylates mischarged glycyl-tRNA(Ala), protecting cells against glycine mischarging by AlaRS. Acts via tRNA-based rather than protein-based catalysis; rejects L-amino acids rather than detecting D-amino acids in the active site. By recycling D-aminoacyl-tRNA to D-amino acids and free tRNA molecules, this enzyme counteracts the toxicity associated with the formation of D-aminoacyl-tRNA entities in vivo and helps enforce protein L-homochirality. The chain is D-aminoacyl-tRNA deacylase from Geobacter metallireducens (strain ATCC 53774 / DSM 7210 / GS-15).